Consider the following 1034-residue polypeptide: Teashirt homolog 2 (1034 aa).

The tract at residues 1 to 90 is disordered; sequence MPRRKQQAPK…NESLLSDASD (90 aa). Residues 13-38 are a coiled coil; sequence AGYAQEEQLKEEEEIKEEEEEEDSGS. Over residues 21–36 the composition is skewed to acidic residues; the sequence is LKEEEEIKEEEEEEDS. Polar residues predominate over residues 65 to 90; sequence SYQNSPGSHLSNQDAENESLLSDASD. Residue K188 forms a Glycyl lysine isopeptide (Lys-Gly) (interchain with G-Cter in SUMO2) linkage. C2H2-type zinc fingers lie at residues 215–239 and 275–299; these read FRCR…ETGH and LKCM…KTKH. Residues 239 to 265 are disordered; sequence HYQDDNRKKDKLRPTSYSKPRKRAFQD. Residues K306 and K315 each participate in a glycyl lysine isopeptide (Lys-Gly) (interchain with G-Cter in SUMO2) cross-link. Residues 380 to 404 form a C2H2-type 3; atypical zinc finger; it reads LKCMECGSSHDTLQQLTTHMMVTGH. K417 participates in a covalent cross-link: Glycyl lysine isopeptide (Lys-Gly) (interchain with G-Cter in SUMO2). Polar residues predominate over residues 432 to 455; sequence LSEAPNSDSLAPKPSSNSASDCTA. Residues 432-496 are disordered; that stretch reads LSEAPNSDSL…PLQKPLDPTI (65 aa). Residues 459-482 show a composition bias toward basic and acidic residues; it reads ELKKESKKERPEETSKDEKVVKSE. Glycyl lysine isopeptide (Lys-Gly) (interchain with G-Cter in SUMO2) cross-links involve residues K461, K480, K497, K601, and K652. Disordered regions lie at residues 598–676 and 763–789; these read TQVK…TSAL and QPID…PPQK. Residues 600 to 668 are compositionally biased toward basic and acidic residues; the sequence is VKKESEDKDE…KEGSEKEKPQ (69 aa). Residues K800 and K820 each participate in a glycyl lysine isopeptide (Lys-Gly) (interchain with G-Cter in SUMO2) cross-link. The segment at residues 841–911 is a DNA-binding region (homeobox; atypical); that stretch reads RKGRQSNWNP…NVKYQLRKTG (71 aa). The segment at 926–948 adopts a C2H2-type 4 zinc-finger fold; that stretch reads FYCSDCASQFRTPSTYISHLESH. A Glycyl lysine isopeptide (Lys-Gly) (interchain with G-Cter in SUMO2) cross-link involves residue K966. S980 carries the phosphoserine modification. A C2H2-type 5 zinc finger spans residues 994 to 1017; it reads FKCKLCCRTFVSKHAVKLHLSKTH. Positions 1014–1034 are disordered; it reads SKTHSKSPEHHSQFVTDVDEE.

Belongs to the teashirt C2H2-type zinc-finger protein family. In terms of assembly, interacts (via homeobox domain) with APBB1 (via PID domain 1). Post-translationally, sumoylated. In terms of tissue distribution, expressed in brain; strongly reduced in post-mortem elderly subjects with Alzheimer disease.

The protein localises to the nucleus. Its function is as follows. Probable transcriptional regulator involved in developmental processes. May act as a transcriptional repressor (Potential). In Homo sapiens (Human), this protein is Teashirt homolog 2 (TSHZ2).